Here is a 499-residue protein sequence, read N- to C-terminus: Catalase (499 aa).

The interval 1 to 25 is disordered; it reads MTDRPIMTTSAGAPIPDNQNSLTAG. The span at 7–23 shows a compositional bias: polar residues; that stretch reads MTTSAGAPIPDNQNSLT. Residues His55 and Asn127 contribute to the active site. Position 337 (Tyr337) interacts with heme.

It belongs to the catalase family. Homotetramer. It depends on heme as a cofactor.

Its subcellular location is the periplasm. The enzyme catalyses 2 H2O2 = O2 + 2 H2O. Decomposes hydrogen peroxide into water and oxygen; serves to protect cells from the toxic effects of hydrogen peroxide. This Brucella abortus biovar 1 (strain 9-941) protein is Catalase (katA).